The sequence spans 59 residues: Membrane-associated ATPase epsilon chain (59 aa).

To E.hirae NtpH. Sul-ATPase is composed of six (or maybe five) subunits: alpha, beta, delta, gamma, C (proteolipid), and possibly epsilon.

It catalyses the reaction ATP + H2O + 4 H(+)(in) = ADP + phosphate + 5 H(+)(out). This chain is Membrane-associated ATPase epsilon chain (atpE), found in Sulfurisphaera tokodaii (strain DSM 16993 / JCM 10545 / NBRC 100140 / 7) (Sulfolobus tokodaii).